Here is a 304-residue protein sequence, read N- to C-terminus: uncharacterized protein (304 aa).

This is an uncharacterized protein from Methanocaldococcus jannaschii (strain ATCC 43067 / DSM 2661 / JAL-1 / JCM 10045 / NBRC 100440) (Methanococcus jannaschii).